The chain runs to 387 residues: G-protein coupled receptor homolog R33 (387 aa).

Over 1–33 (MDVLLGTEELEDELHQLHFNYTCVPSLGLSVAR) the chain is Extracellular. N-linked (GlcNAc...) asparagine; by host glycosylation occurs at Asn-20. A helical transmembrane segment spans residues 34-61 (DAETAVNFLIVLVGGPMNFLVLATQMLS). Over 62 to 71 (NRSYSVSTPT) the chain is Cytoplasmic. A helical transmembrane segment spans residues 72–94 (LYMTNLYLANLLTVATLPFLMLS). The Extracellular segment spans residues 95 to 107 (NRGLVGSSPEGCK). A helical transmembrane segment spans residues 108 to 129 (IAALAYYATCTAGFATLMLIAI). The Cytoplasmic portion of the chain corresponds to 130 to 150 (NRYRVIHQRTRSGAGSKRQTY). A helical transmembrane segment spans residues 151-169 (AVLAVTWLASLMCASPAPL). Over 170–204 (YATVMAHDSADALAFETCIIYFSYDQVKTVLATFK) the chain is Extracellular. The chain crosses the membrane as a helical span at residues 205–224 (ILITMIWGITPVVMMSWFYV). The Cytoplasmic segment spans residues 225–244 (FFYRRLKLTSYRRRSQTLTF). The chain crosses the membrane as a helical span at residues 245 to 268 (VTTLMLSFLVVQTPFVAIMSYDSY). Residues 269–285 (GVLNWPINCDTINKRDA) are Extracellular-facing. Residues 286–309 (VSMLARVVPNFHCLLNPVLYAFLG) form a helical membrane-spanning segment. Residues 310-387 (RDFNKRFILC…PPPPPPPPNC (78 aa)) are Cytoplasmic-facing. The interval 368–387 (RLRALGRPPPPPPPPPPPNC) is disordered. Pro residues predominate over residues 374-387 (RPPPPPPPPPPPNC).

Belongs to the G-protein coupled receptor 1 family.

The protein resides in the host cell membrane. Functionally, plays an important role in vivo, in particular in the dissemination to or replication in the salivary gland. The polypeptide is G-protein coupled receptor homolog R33 (Rattus).